Reading from the N-terminus, the 254-residue chain is Membrane protein US20 (254 aa).

The next 7 membrane-spanning stretches (helical) occupy residues 31 to 51 (AIFI…WLGF), 62 to 82 (YSFF…YTLG), 89 to 109 (ATVL…FQMC), 114 to 134 (VLVG…GLAF), 143 to 163 (WKCI…LALL), 178 to 198 (AFSI…VIFF), and 208 to 228 (AVCL…MLSG).

Its subcellular location is the host membrane. The sequence is that of Membrane protein US20 (US20) from Homo sapiens (Human).